The sequence spans 158 residues: NADH-quinone oxidoreductase subunit B 2 (158 aa).

[4Fe-4S] cluster is bound by residues C37, C38, C102, and C132.

It belongs to the complex I 20 kDa subunit family. In terms of assembly, NDH-1 is composed of 14 different subunits. Subunits NuoB, C, D, E, F, and G constitute the peripheral sector of the complex. Requires [4Fe-4S] cluster as cofactor.

The protein resides in the cell inner membrane. The catalysed reaction is a quinone + NADH + 5 H(+)(in) = a quinol + NAD(+) + 4 H(+)(out). Functionally, NDH-1 shuttles electrons from NADH, via FMN and iron-sulfur (Fe-S) centers, to quinones in the respiratory chain. Couples the redox reaction to proton translocation (for every two electrons transferred, four hydrogen ions are translocated across the cytoplasmic membrane), and thus conserves the redox energy in a proton gradient. The protein is NADH-quinone oxidoreductase subunit B 2 of Acidithiobacillus ferrooxidans (strain ATCC 53993 / BNL-5-31) (Leptospirillum ferrooxidans (ATCC 53993)).